A 415-amino-acid chain; its full sequence is uncharacterized protein (415 aa).

[4Fe-4S] cluster contacts are provided by C66, C72, C75, and C149. Q249, F276, E296, and D344 together coordinate S-adenosyl-L-methionine. C370 functions as the Nucleophile in the catalytic mechanism.

Belongs to the class I-like SAM-binding methyltransferase superfamily. RNA M5U methyltransferase family.

This is an uncharacterized protein from Brucella melitensis biotype 1 (strain ATCC 23456 / CCUG 17765 / NCTC 10094 / 16M).